A 495-amino-acid polypeptide reads, in one-letter code: Angiopoietin-2 (495 aa).

An N-terminal signal peptide occupies residues 1-18; sequence MWQIVFFTLSCDLVRAAA. Residues Asn88, Asn118, Asn132, Asn150, Asn239, and Asn303 are each glycosylated (N-linked (GlcNAc...) asparagine). A coiled-coil region spans residues 165–247; that stretch reads STNKLEKQIL…VNNSVLQKQQ (83 aa). The Fibrinogen C-terminal domain maps to 274-494; that stretch reads KEEQIIYRDC…GTTMMIRPAD (221 aa). An intrachain disulfide couples Cys283 to Cys312. Ca(2+) contacts are provided by Asp428, Asp430, Cys432, and Cys434. Cystine bridges form between Cys432-Cys434 and Cys436-Cys449.

In terms of assembly, interacts with TEK/TIE2, competing for the same binding site as ANGPT1. Interacts with ITGA5. Interacts with SVEP1/polydom. Interacts with THBD; this interaction significantly inhibits the generation of activated PC and TAFIa/CPB2 by the thrombin/thrombomodulin complex.

The protein resides in the secreted. Binds to TEK/TIE2, competing for the ANGPT1 binding site, and modulating ANGPT1 signaling. Can induce tyrosine phosphorylation of TEK/TIE2 in the absence of ANGPT1. In the absence of angiogenic inducers, such as VEGF, ANGPT2-mediated loosening of cell-matrix contacts may induce endothelial cell apoptosis with consequent vascular regression. In concert with VEGF, it may facilitate endothelial cell migration and proliferation, thus serving as a permissive angiogenic signal. Involved in the regulation of lymphangiogenesis. This chain is Angiopoietin-2 (ANGPT2), found in Canis lupus familiaris (Dog).